The sequence spans 125 residues: Large ribosomal subunit protein uL22 (125 aa).

Belongs to the universal ribosomal protein uL22 family. In terms of assembly, part of the 50S ribosomal subunit.

Its function is as follows. This protein binds specifically to 23S rRNA; its binding is stimulated by other ribosomal proteins, e.g. L4, L17, and L20. It is important during the early stages of 50S assembly. It makes multiple contacts with different domains of the 23S rRNA in the assembled 50S subunit and ribosome. Functionally, the globular domain of the protein is located near the polypeptide exit tunnel on the outside of the subunit, while an extended beta-hairpin is found that lines the wall of the exit tunnel in the center of the 70S ribosome. The polypeptide is Large ribosomal subunit protein uL22 (Erythrobacter litoralis (strain HTCC2594)).